We begin with the raw amino-acid sequence, 437 residues long: MSMFLDTAKISVQAGRGGDGMVAFRREKYVPNGGPWGGDGGKGGSVIFRVDEGLRTLMDFRYNRKFKAKSGEKGMTKGMHGRGAEDLIVFVPQGTTVRDAETGKVITDLVEHGQEVVIAKGGRGGRGNIRFATPRNPAPEIAENGEPGEERQLELELKILADVGLVGFPSVGKSTLLSVVSSAKPKIGAYHFTTIVPNLGMVRTKSGDSFAMADLPGLIEGASQGIGLGTQFLRHIERTRVILHVIDMSASEGRDPYEDYVSINNELETYNLRLMERPQIIVANKMDMPEAQENLKAFKKKLAAQYDEFDDLPMIFPISSLAHQGLENLLEATAELLAKTDEFLLYDEADLVDEEAYYGFAETEKDFEITRDDDATWVLSGEKLERLFVMTNMERDESIMKFARQLRGMGVDEALRERGAKDGDLVRIGKFEFEFVD.

The Obg domain maps to 2–160; the sequence is SMFLDTAKIS…RQLELELKIL (159 aa). Residues 161–338 enclose the OBG-type G domain; sequence ADVGLVGFPS…LLEATAELLA (178 aa). GTP-binding positions include 167–174, 192–196, 214–217, 284–287, and 319–321; these read GFPSVGKS, FTTIV, DLPG, NKMD, and SSL. Mg(2+) is bound by residues Ser174 and Thr194. Residues 359–437 enclose the OCT domain; sequence GFAETEKDFE…IGKFEFEFVD (79 aa).

The protein belongs to the TRAFAC class OBG-HflX-like GTPase superfamily. OBG GTPase family. Monomer. The cofactor is Mg(2+).

The protein localises to the cytoplasm. Functionally, an essential GTPase which binds GTP, GDP and possibly (p)ppGpp with moderate affinity, with high nucleotide exchange rates and a fairly low GTP hydrolysis rate. Plays a role in control of the cell cycle, stress response, ribosome biogenesis and in those bacteria that undergo differentiation, in morphogenesis control. This chain is GTPase Obg, found in Streptococcus pyogenes serotype M4 (strain MGAS10750).